We begin with the raw amino-acid sequence, 126 residues long: UPF0344 protein ABC2900 (126 aa).

Transmembrane regions (helical) follow at residues 16–36, 43–63, 66–86, and 104–124; these read ASHE…YFLF, AGTI…VTGA, LIAY…VLLI, and GMLF…YGII.

This sequence belongs to the UPF0344 family.

The protein resides in the cell membrane. This Shouchella clausii (strain KSM-K16) (Alkalihalobacillus clausii) protein is UPF0344 protein ABC2900.